Here is a 185-residue protein sequence, read N- to C-terminus: Transcription factor E (185 aa).

The HTH TFE/IIEalpha-type domain occupies 5-88 (KNKELLEIAQ…YWRLETKKLP (84 aa)).

Belongs to the TFE family. As to quaternary structure, monomer. Interaction with RNA polymerase subunits RpoF and RpoE is necessary for Tfe stimulatory transcription activity. Able to interact with Tbp and RNA polymerase in the absence of DNA promoter. Interacts both with the preinitiation and elongation complexes.

In terms of biological role, transcription factor that plays a role in the activation of archaeal genes transcribed by RNA polymerase. Facilitates transcription initiation by enhancing TATA-box recognition by TATA-box-binding protein (Tbp), and transcription factor B (Tfb) and RNA polymerase recruitment. Not absolutely required for transcription in vitro, but particularly important in cases where Tbp or Tfb function is not optimal. It dynamically alters the nucleic acid-binding properties of RNA polymerases by stabilizing the initiation complex and destabilizing elongation complexes. Seems to translocate with the RNA polymerase following initiation and acts by binding to the non template strand of the transcription bubble in elongation complexes. This chain is Transcription factor E, found in Thermococcus kodakarensis (strain ATCC BAA-918 / JCM 12380 / KOD1) (Pyrococcus kodakaraensis (strain KOD1)).